The sequence spans 52 residues: UPF0391 membrane protein ACIAD3602 (52 aa).

Helical transmembrane passes span 6 to 26 (IIFAVIALIASLLGFGGVAGL) and 30 to 50 (FAVILLVVAVILAIVGFISRG).

This sequence belongs to the UPF0391 family.

The protein localises to the cell membrane. This Acinetobacter baylyi (strain ATCC 33305 / BD413 / ADP1) protein is UPF0391 membrane protein ACIAD3602.